Here is a 146-residue protein sequence, read N- to C-terminus: Transmembrane protein 207 (146 aa).

The N-terminal stretch at 1 to 29 (MSRSRLFSVTSAISTIGILCLPLFQLVLS) is a signal peptide. A helical membrane pass occupies residues 52 to 72 (IWILLLLVLVAALLCGAVVLC).

In terms of assembly, interacts with WWOX. In terms of tissue distribution, expressed in some signet-ring cell carcinoma, especially those showing high invasion and metastatic activity (at protein level).

It localises to the membrane. This Homo sapiens (Human) protein is Transmembrane protein 207 (TMEM207).